A 472-amino-acid polypeptide reads, in one-letter code: Uronate isomerase (472 aa).

Belongs to the metallo-dependent hydrolases superfamily. Uronate isomerase family.

The catalysed reaction is D-glucuronate = D-fructuronate. The enzyme catalyses aldehydo-D-galacturonate = keto-D-tagaturonate. It participates in carbohydrate metabolism; pentose and glucuronate interconversion. The chain is Uronate isomerase from Shouchella clausii (strain KSM-K16) (Alkalihalobacillus clausii).